Consider the following 633-residue polypeptide: Probable potassium transport system protein Kup (633 aa).

12 helical membrane-spanning segments follow: residues 21 to 41 (MLVA…LYTL), 61 to 81 (ILSL…MMFV), 112 to 132 (LLVV…MITP), 149 to 169 (GIDH…FLIQ), 176 to 196 (IGIL…ALGV), 217 to 237 (FFMV…LALT), 258 to 278 (WFLL…ALLL), 290 to 310 (LLAP…ATVI), 348 to 368 (IYIG…VIGF), 377 to 397 (AYGV…SAVM), 398 to 418 (LLLW…FLLV), and 430 to 450 (IVQG…LMTT).

This sequence belongs to the HAK/KUP transporter (TC 2.A.72) family.

Its subcellular location is the cell inner membrane. It catalyses the reaction K(+)(in) + H(+)(in) = K(+)(out) + H(+)(out). Functionally, transport of potassium into the cell. Likely operates as a K(+):H(+) symporter. The chain is Probable potassium transport system protein Kup from Pseudomonas fluorescens (strain Pf0-1).